A 631-amino-acid polypeptide reads, in one-letter code: MPTTFQEIPRERPVTPLLDRADTPAGLRRLAEADLETLADELRQDLLYTVGQTGGHFGAGLGVIELTIALHYVFDTPDDRLVWDVGHQAYPHKILTGRRDRMLSLRQKDGIAAFPRRSESEYDTFGVGHSSTSISAALGMAIAARLQNDPRKSIAVIGDGALTAGMAFEALNHAQEVDANMLVILNDNDMSISRNVGGLSNYLAKILSSRTYASMREGSKKVLSRLPGAWEIARRTEEYAKGMLVPGTLFEELGWNYIGPIDGHDLPTLIATLRNMRDLKGPQFLHVVTKKGKGFAPAEVDPIGYHAITKLEPADKPVAPKKPSGPKYSAVFGQWLCDMAAADNRLVGITPAMKEGSDLVDFSERYPERYFDVAIAEQHAVTFAAGMACEGAKPVVAIYSTFLQRAYDQLIHDVAVQDLDVLFAIDRAGLVGEDGPTHAGAYDLSYLRCIPGMLVMTPSDENELRKMLSTGHHYKGPAAVRYPRGTGPNAPISGDLEPLEIGKGVVRRQGGKVALLVFGVQLTEALQVAEQIDATVVDMRFVKPLDEALVLEMAAGHELLVTIEENAIMGGAGAAVGEFLAREGVVKPLLHLGLPDIYVEHAKPAQMLAECGLDAAGIEASVKARMAKLGL.

Thiamine diphosphate is bound by residues histidine 87 and glycine 128–serine 130. Aspartate 159 contacts Mg(2+). Residues glycine 160–alanine 161, asparagine 188, phenylalanine 295, and glutamate 377 contribute to the thiamine diphosphate site. Residue asparagine 188 participates in Mg(2+) binding.

This sequence belongs to the transketolase family. DXPS subfamily. In terms of assembly, homodimer. It depends on Mg(2+) as a cofactor. Thiamine diphosphate is required as a cofactor.

The enzyme catalyses D-glyceraldehyde 3-phosphate + pyruvate + H(+) = 1-deoxy-D-xylulose 5-phosphate + CO2. Its pathway is metabolic intermediate biosynthesis; 1-deoxy-D-xylulose 5-phosphate biosynthesis; 1-deoxy-D-xylulose 5-phosphate from D-glyceraldehyde 3-phosphate and pyruvate: step 1/1. In terms of biological role, catalyzes the acyloin condensation reaction between C atoms 2 and 3 of pyruvate and glyceraldehyde 3-phosphate to yield 1-deoxy-D-xylulose-5-phosphate (DXP). This is 1-deoxy-D-xylulose-5-phosphate synthase from Pseudomonas entomophila (strain L48).